The following is a 766-amino-acid chain: Protein transport protein Sec23B (766 aa).

Ala2 carries the post-translational modification N-acetylalanine. Residues Cys61, Cys66, Cys85, and Cys88 each coordinate Zn(2+). N6-acetyllysine is present on Lys564. The stretch at 633 to 719 (PEPVLLDSSS…EHGGSQARFL (87 aa)) is one Gelsolin-like repeat.

This sequence belongs to the SEC23/SEC24 family. SEC23 subfamily. As to quaternary structure, COPII is composed of at least five proteins: the Sec23/24 complex, the Sec13/31 complex and Sar1. Interacts with SAR1A.

It localises to the cytoplasmic vesicle. The protein resides in the COPII-coated vesicle membrane. Its subcellular location is the endoplasmic reticulum membrane. The protein localises to the cytoplasm. It is found in the cytosol. In terms of biological role, component of the coat protein complex II (COPII) which promotes the formation of transport vesicles from the endoplasmic reticulum (ER). The coat has two main functions, the physical deformation of the endoplasmic reticulum membrane into vesicles and the selection of cargo molecules for their transport to the Golgi complex. This is Protein transport protein Sec23B from Pongo abelii (Sumatran orangutan).